Reading from the N-terminus, the 422-residue chain is Tyrosine--tRNA ligase (422 aa).

L-tyrosine is bound at residue tyrosine 37. A 'HIGH' region motif is present at residues 42–51; sequence PTEESLHIGH. Residues tyrosine 175 and glutamine 179 each coordinate L-tyrosine. Positions 235–239 match the 'KMSKS' region motif; it reads KFGKT. Lysine 238 provides a ligand contact to ATP. The 58-residue stretch at 357-414 folds into the S4 RNA-binding domain; sequence KDLQEALVLTSLAQSRTQAKNMIISNSISINTEKIRKNHIFHEKDKLFGKFTLLSRGK.

It belongs to the class-I aminoacyl-tRNA synthetase family. TyrS type 1 subfamily. Homodimer.

Its subcellular location is the cytoplasm. It carries out the reaction tRNA(Tyr) + L-tyrosine + ATP = L-tyrosyl-tRNA(Tyr) + AMP + diphosphate + H(+). In terms of biological role, catalyzes the attachment of tyrosine to tRNA(Tyr) in a two-step reaction: tyrosine is first activated by ATP to form Tyr-AMP and then transferred to the acceptor end of tRNA(Tyr). The chain is Tyrosine--tRNA ligase from Buchnera aphidicola subsp. Acyrthosiphon pisum (strain APS) (Acyrthosiphon pisum symbiotic bacterium).